The following is a 251-amino-acid chain: Pantothenate synthetase (251 aa).

Position 28–35 (28–35) interacts with ATP; sequence MGALHTGH. Catalysis depends on His-35, which acts as the Proton donor. Gln-59 serves as a coordination point for (R)-pantoate. Gln-59 contributes to the beta-alanine binding site. Residue 145 to 148 participates in ATP binding; that stretch reads GEKD. (R)-pantoate is bound at residue Gln-151. Residues Val-174 and 182-185 contribute to the ATP site; that span reads KSSR.

Belongs to the pantothenate synthetase family. As to quaternary structure, homodimer.

It is found in the cytoplasm. It catalyses the reaction (R)-pantoate + beta-alanine + ATP = (R)-pantothenate + AMP + diphosphate + H(+). It functions in the pathway cofactor biosynthesis; (R)-pantothenate biosynthesis; (R)-pantothenate from (R)-pantoate and beta-alanine: step 1/1. Its function is as follows. Catalyzes the condensation of pantoate with beta-alanine in an ATP-dependent reaction via a pantoyl-adenylate intermediate. The protein is Pantothenate synthetase of Bdellovibrio bacteriovorus (strain ATCC 15356 / DSM 50701 / NCIMB 9529 / HD100).